Reading from the N-terminus, the 353-residue chain is Phosphate acyltransferase (353 aa).

Belongs to the PlsX family. Homodimer. Probably interacts with PlsY.

Its subcellular location is the cytoplasm. The enzyme catalyses a fatty acyl-[ACP] + phosphate = an acyl phosphate + holo-[ACP]. It participates in lipid metabolism; phospholipid metabolism. Functionally, catalyzes the reversible formation of acyl-phosphate (acyl-PO(4)) from acyl-[acyl-carrier-protein] (acyl-ACP). This enzyme utilizes acyl-ACP as fatty acyl donor, but not acyl-CoA. The polypeptide is Phosphate acyltransferase (Rhodopseudomonas palustris (strain BisB18)).